The sequence spans 489 residues: Betaine aldehyde dehydrogenase (489 aa).

K(+) is bound by residues Thr26 and Asp93. 150 to 152 (GAW) contacts NAD(+). Lys162 serves as the catalytic Charge relay system. An NAD(+)-binding site is contributed by 176-179 (KPSE). Val180 lines the K(+) pocket. 229-232 (GVET) is a binding site for NAD(+). Leu245 lines the K(+) pocket. Glu251 serves as the catalytic Proton acceptor. Residues Gly253, Cys285, and Glu386 each contribute to the NAD(+) site. Cys285 (nucleophile) is an active-site residue. A Cysteine sulfenic acid (-SOH) modification is found at Cys285. Residues Lys456 and Gly459 each coordinate K(+). Glu463 (charge relay system) is an active-site residue.

This sequence belongs to the aldehyde dehydrogenase family. Dimer of dimers. Requires K(+) as cofactor.

It carries out the reaction betaine aldehyde + NAD(+) + H2O = glycine betaine + NADH + 2 H(+). The protein operates within amine and polyamine biosynthesis; betaine biosynthesis via choline pathway; betaine from betaine aldehyde: step 1/1. In terms of biological role, involved in the biosynthesis of the osmoprotectant glycine betaine. Catalyzes the irreversible oxidation of betaine aldehyde to the corresponding acid. This chain is Betaine aldehyde dehydrogenase, found in Burkholderia ambifaria (strain ATCC BAA-244 / DSM 16087 / CCUG 44356 / LMG 19182 / AMMD) (Burkholderia cepacia (strain AMMD)).